The chain runs to 237 residues: N-(5'-phosphoribosyl)anthranilate isomerase (237 aa).

Belongs to the TrpF family.

It carries out the reaction N-(5-phospho-beta-D-ribosyl)anthranilate = 1-(2-carboxyphenylamino)-1-deoxy-D-ribulose 5-phosphate. It participates in amino-acid biosynthesis; L-tryptophan biosynthesis; L-tryptophan from chorismate: step 3/5. In Desulfitobacterium hafniense (strain DSM 10664 / DCB-2), this protein is N-(5'-phosphoribosyl)anthranilate isomerase.